The following is a 449-amino-acid chain: Putative BTB/POZ domain-containing protein L742 (449 aa).

One can recognise a BTB domain in the interval 79–148 (EDGYVYINIG…LTMSNQELSG (70 aa)).

Belongs to the mimivirus BTB/WD family.

The protein is Putative BTB/POZ domain-containing protein L742 of Acanthamoeba polyphaga mimivirus (APMV).